The following is a 300-amino-acid chain: Geranylgeranyl pyrophosphate synthase (300 aa).

N-acetylmethionine is present on methionine 1. 3 residues coordinate isopentenyl diphosphate: lysine 25, arginine 28, and histidine 57. Residues aspartate 64 and aspartate 68 each coordinate Mg(2+). Arginine 73 is a dimethylallyl diphosphate binding site. Position 74 (arginine 74) interacts with isopentenyl diphosphate. Lysine 151, threonine 152, glutamine 185, lysine 202, and lysine 212 together coordinate dimethylallyl diphosphate.

It belongs to the FPP/GGPP synthase family. In terms of assembly, homohexamer; trimer of homodimers. Mg(2+) serves as cofactor.

It localises to the cytoplasm. The protein resides in the perinuclear region. Its subcellular location is the myofibril. It is found in the sarcomere. The protein localises to the z line. The catalysed reaction is isopentenyl diphosphate + dimethylallyl diphosphate = (2E)-geranyl diphosphate + diphosphate. The enzyme catalyses isopentenyl diphosphate + (2E)-geranyl diphosphate = (2E,6E)-farnesyl diphosphate + diphosphate. It carries out the reaction isopentenyl diphosphate + (2E,6E)-farnesyl diphosphate = (2E,6E,10E)-geranylgeranyl diphosphate + diphosphate. Its pathway is isoprenoid biosynthesis; farnesyl diphosphate biosynthesis; farnesyl diphosphate from geranyl diphosphate and isopentenyl diphosphate: step 1/1. It functions in the pathway isoprenoid biosynthesis; geranyl diphosphate biosynthesis; geranyl diphosphate from dimethylallyl diphosphate and isopentenyl diphosphate: step 1/1. The protein operates within isoprenoid biosynthesis; geranylgeranyl diphosphate biosynthesis; geranylgeranyl diphosphate from farnesyl diphosphate and isopentenyl diphosphate: step 1/1. Its function is as follows. Catalyzes the trans-addition of the three molecules of IPP onto DMAPP to form geranylgeranyl pyrophosphate, an important precursor of carotenoids and geranylated proteins. In Rattus norvegicus (Rat), this protein is Geranylgeranyl pyrophosphate synthase (Ggps1).